A 166-amino-acid polypeptide reads, in one-letter code: Cofilin-1 (166 aa).

An N-acetylalanine modification is found at A2. A phosphoserine mark is found at S3 and S8. In terms of domain architecture, ADF-H spans G4–L153. An N6-acetyllysine modification is found at K13. Residue T25 is modified to Phosphothreonine. A Nuclear localization signal motif is present at residues K30–K34. S41 carries the phosphoserine modification. Phosphotyrosine is present on Y68. K73 carries the post-translational modification N6-acetyllysine. A Glycyl lysine isopeptide (Lys-Gly) (interchain with G-Cter in SUMO2) cross-link involves residue K132. A Phosphotyrosine modification is found at Y140. K144 carries the N6-acetyllysine modification. Position 156 is a phosphoserine (S156).

The protein belongs to the actin-binding proteins ADF family. In terms of assembly, can bind G- and F-actin in a 1:1 ratio of cofilin to actin. It is a major component of intranuclear and cytoplasmic actin rods. Interacts with the subcortical maternal complex (SCMC) via interaction with TLE6 and NLRP5. Interacts with C9orf72. In terms of processing, inactivated by phosphorylation on Ser-3. Phosphorylated on Ser-3 in resting cells. Dephosphorylated by PDXP/chronophin; this restores its activity in promoting actin filament depolymerization. The phosphorylation of Ser-24 may prevent recognition of the nuclear localization signal. Phosphorylated via a ARRB1-RAC1-LIMK1-PAK1 cascade upon active ligand stimulation of atypical chemokine receptor ACKR2.

The protein localises to the nucleus matrix. It is found in the cytoplasm. It localises to the cytoskeleton. Its subcellular location is the cell projection. The protein resides in the ruffle membrane. The protein localises to the lamellipodium membrane. It is found in the lamellipodium. It localises to the growth cone. Its subcellular location is the axon. In terms of biological role, binds to F-actin and exhibits pH-sensitive F-actin depolymerizing activity. Important for normal progress through mitosis and normal cytokinesis. In conjunction with the subcortical maternal complex (SCMC), plays an essential role for zygotes to progress beyond the first embryonic cell divisions via regulation of actin dynamics. Required for the centralization of the mitotic spindle and symmetric division of zygotes. Plays a role in the regulation of cell morphology and cytoskeletal organization in epithelial cells. Required for the up-regulation of atypical chemokine receptor ACKR2 from endosomal compartment to cell membrane, increasing its efficiency in chemokine uptake and degradation. Required for neural tube morphogenesis and neural crest cell migration. In Rattus norvegicus (Rat), this protein is Cofilin-1 (Cfl1).